The primary structure comprises 1044 residues: Protein ITPRID1 (1044 aa).

The span at 1-14 shows a compositional bias: polar residues; the sequence is MMAQKSQGSDNLQE. 4 disordered regions span residues 1-20, 230-251, 388-489, and 583-607; these read MMAQ…EKSK, EEKA…EHRR, MEEV…SSQE, and PEGA…HTQD. The span at 388–398 shows a compositional bias: acidic residues; sequence MEEVQSFEEET. 2 stretches are compositionally biased toward polar residues: residues 460–469 and 480–489; these read HSLVSSQDCQ and RASMSFSSQE. Residues 896–937 are a coiled coil; that stretch reads SRDMSEEEREEAEQLQTLREALRQQVAELEFQLGDRAQQIRE.

The sequence is that of Protein ITPRID1 from Homo sapiens (Human).